We begin with the raw amino-acid sequence, 326 residues long: Phosphotriesterase homology protein (326 aa).

Residues His-22, His-24, Lys-145, His-178, His-207, and Asp-264 each contribute to the Zn(2+) site. Position 145 is an N6-carboxylysine (Lys-145).

This sequence belongs to the metallo-dependent hydrolases superfamily. Phosphotriesterase family. Zn(2+) is required as a cofactor.

The chain is Phosphotriesterase homology protein (php) from Mycobacterium tuberculosis (strain CDC 1551 / Oshkosh).